A 1089-amino-acid polypeptide reads, in one-letter code: Electroneutral sodium bicarbonate exchanger 1 (1089 aa).

The Extracellular portion of the chain corresponds to 1 to 476; sequence MPAGSNEPDG…DYRDALSLQC (476 aa). The interval 55 to 90 is disordered; the sequence is LGRQSHRHHRTHGQKHRRRGGRGKGASQGEEGLEAL. Positions 58-76 are enriched in basic residues; it reads QSHRHHRTHGQKHRRRGGR. Residues 477–497 traverse the membrane as a helical segment; it reads LASFLFLYCACMSPVITFGGL. Residues 498 to 505 are Cytoplasmic-facing; it reads LGEATEGR. Residues 506–526 form a helical membrane-spanning segment; the sequence is ISAIESLFGASMTGIAYSLFA. Residues 527–563 lie on the Extracellular side of the membrane; it reads GQPLTILGSTGPVLVFEKILFKFCKDYALSYLSLRAL. The helical transmembrane segment at 564 to 584 threads the bilayer; sequence IGLWTAFLCIVLVATDASSLV. The Cytoplasmic segment spans residues 585-593; sequence CYITRFTEE. Residues 594–614 traverse the membrane as a helical segment; sequence AFASLICIIFIYEAIEKLIHL. Over 615 to 685 the chain is Extracellular; that stretch reads AETYPIHMHS…EFMGSACGHH (71 aa). 2 disulfide bridges follow: Cys-634/Cys-682 and Cys-636/Cys-670. N-linked (GlcNAc) asparagine glycosylation is present at Asn-644. A helical membrane pass occupies residues 686–706; the sequence is GPYTPDVLFWSCILFFATFIV. The Cytoplasmic segment spans residues 707–729; sequence SSTLKTFKTSRYFPTRVRSMVSD. A helical transmembrane segment spans residues 730-750; that stretch reads FAVFLTIFTMVVLDFLIGVPS. Residues 751–776 are Extracellular-facing; that stretch reads PKLQVPNVFKPTRDDRGWFINPIGPN. A helical membrane pass occupies residues 777–797; the sequence is PWWTVIAAIIPALLCTILIFM. The Cytoplasmic segment spans residues 798–822; sequence DQQITAVIINRKEHKLKKGCGYHLD. The helical transmembrane segment at 823–843 threads the bilayer; that stretch reads LLMVAVMLGVCSIMGLPWFVA. Topologically, residues 844–879 are extracellular; it reads ATVLSITHVNSLKLESECSAPGEQPKFLGIREQRVT. Residues 880–900 traverse the membrane as a helical segment; the sequence is GLMIFVLMGCSVFMTAVLKFI. At 901–902 the chain is on the cytoplasmic side; it reads PM. The chain crosses the membrane as a helical span at residues 903–923; it reads PVLYGVFLYMGVSSLQGIQFF. Over 924–960 the chain is Extracellular; the sequence is DRLKLFGMPAKHQPDFIYLRHVPLRKVHLFTLVQLTC. Residues 961 to 981 form a helical membrane-spanning segment; that stretch reads LVLLWVIKASPAAIVFPMMVL. Topologically, residues 982 to 1089 are cytoplasmic; the sequence is ALVFVRKVMD…GNTKEKSPFN (108 aa).

This sequence belongs to the anion exchanger (TC 2.A.31) family. In terms of assembly, homodimer. In terms of tissue distribution, expressed in the hippocampal neurons (at protein level). Highly expressed in brain with lower levels in lung, kidney and heart. In the kidney, there is high expression in the inner medulla, localized to the inner medullary collecting duct. In the brain, there seems to be three transcripts each having a different expression pattern. The smaller 3kb transcript has highest expression levels in the thalamus and the largest 9.5kb transcript has highest levels in the substantia nigra. The middle transcript of 4.4kb, which is also the main transcript in kidney, is highly expressed in thalamus. Hence, the highest levels are observed in the thalamus, amygdala and caudate nucleus and very low expression was seen in the corpus callosum.

The protein localises to the cell membrane. It localises to the apical cell membrane. The protein resides in the basolateral cell membrane. It is found in the cytoplasmic vesicle. Its subcellular location is the secretory vesicle. The protein localises to the synaptic vesicle membrane. The catalysed reaction is 2 hydrogencarbonate(out) + chloride(in) + Na(+)(out) = 2 hydrogencarbonate(in) + chloride(out) + Na(+)(in). Functionally, mediates electroneutral sodium- and carbonate-dependent chloride-HCO3(-) exchange with a Na(+):HCO3(-) stoichiometry of 2:1. Plays a major role in pH regulation in neurons. Mediates sodium reabsorption in the renal cortical collecting ducts. The chain is Electroneutral sodium bicarbonate exchanger 1 from Mus musculus (Mouse).